We begin with the raw amino-acid sequence, 116 residues long: Biogenesis of lysosome-related organelles complex 1 subunit CNL1 (116 aa).

The stretch at 63-95 (DIVDVNIQSFKDILSKCEELENYFTMLDQIEMI) forms a coiled coil.

It belongs to the BLOC1S4 family. In terms of assembly, component of the biogenesis of lysosome-related organelles complex-1 (BLOC-1).

It localises to the cytoplasm. Functionally, component of the biogenesis of lysosome-related organelles complex-1 (BLOC-1), a complex that is involved in endosomal cargo sorting. This chain is Biogenesis of lysosome-related organelles complex 1 subunit CNL1 (CLN1), found in Vanderwaltozyma polyspora (strain ATCC 22028 / DSM 70294 / BCRC 21397 / CBS 2163 / NBRC 10782 / NRRL Y-8283 / UCD 57-17) (Kluyveromyces polysporus).